The chain runs to 324 residues: Serpentine receptor class delta-30 (324 aa).

The next 7 helical transmembrane spans lie at 5 to 25 (IIHSVLSTVGVSLNAFMMYLA), 38 to 58 (AIITIKTGTDILASIMSFFVM), 83 to 103 (ACYVGHMLMLCFLEYNLIWMI), 124 to 144 (VFVAFCLSIPSMVHMAAWFSF), 176 to 196 (ITLITQLFITAFLVVVAYIWI), 227 to 247 (FQVFLPSFIFLGVITFASMFT), and 258 to 278 (AISVIFMFSPICSPFSYILFV). The segment at 290–324 (KQPKPHPEMCGPIRSNTRTTSISVTNNSSHLSSAH) is disordered. Positions 303–324 (RSNTRTTSISVTNNSSHLSSAH) are enriched in polar residues.

This sequence belongs to the nematode receptor-like protein srd family.

Its subcellular location is the membrane. This Caenorhabditis elegans protein is Serpentine receptor class delta-30 (srd-30).